The chain runs to 281 residues: 3-mercaptopyruvate sulfurtransferase (281 aa).

2 Rhodanese domains span residues 17–135 (DDPE…LLEE) and 165–278 (HENT…LPVE). R179 is a substrate binding site. The active-site Cysteine persulfide intermediate is the C238. The interval 238-244 (CGSGVTA) is substrate specificity.

In terms of assembly, monomer.

Its subcellular location is the cytoplasm. It carries out the reaction 2-oxo-3-sulfanylpropanoate + [thioredoxin]-dithiol = [thioredoxin]-disulfide + hydrogen sulfide + pyruvate + H(+). Catalyzes the transfer of sulfur from 3-mercaptopyruvate to a thiol-containing acceptor to form an intramolecular disulfide releasing hydrogen sulfide and pyruvate. May be involved in the enhancement of bacterial growth inhibition by serine. The chain is 3-mercaptopyruvate sulfurtransferase (sseA) from Escherichia coli (strain K12).